We begin with the raw amino-acid sequence, 320 residues long: Protoheme IX farnesyltransferase 1 (320 aa).

Helical transmembrane passes span 34–54, 58–78, 112–132, 135–155, 160–180, 189–209, 234–254, 255–275, and 299–319; these read GIII…FASA, LTGL…AFVM, AMIL…LYSL, LTAF…TVWV, VWST…GYCA, AVLL…AIGI, IKMM…PFSL, GTGH…GIWI, and LIYF…MFLI.

It belongs to the UbiA prenyltransferase family. Protoheme IX farnesyltransferase subfamily. As to quaternary structure, interacts with CtaA.

The protein localises to the cell membrane. The enzyme catalyses heme b + (2E,6E)-farnesyl diphosphate + H2O = Fe(II)-heme o + diphosphate. Its pathway is porphyrin-containing compound metabolism; heme O biosynthesis; heme O from protoheme: step 1/1. Its function is as follows. Converts heme B (protoheme IX) to heme O by substitution of the vinyl group on carbon 2 of heme B porphyrin ring with a hydroxyethyl farnesyl side group. This chain is Protoheme IX farnesyltransferase 1 (ctaB1), found in Bacillus subtilis (strain 168).